The primary structure comprises 359 residues: Heat-inducible transcription repressor HrcA (359 aa).

Belongs to the HrcA family.

In terms of biological role, negative regulator of class I heat shock genes (grpE-dnaK-dnaJ and groELS operons). Prevents heat-shock induction of these operons. The chain is Heat-inducible transcription repressor HrcA from Roseiflexus castenholzii (strain DSM 13941 / HLO8).